Here is a 161-residue protein sequence, read N- to C-terminus: Lipoprotein signal peptidase (161 aa).

4 helical membrane-spanning segments follow: residues 8 to 28, 40 to 60, 67 to 87, and 91 to 111; these read LKYF…KYLA, ITSF…SLLS, QMIM…YLII, and ITEK…LGNF. Residues Asp-122 and Asp-140 contribute to the active site. The chain crosses the membrane as a helical span at residues 136–156; it reads FNIADSAITCGVVILIAASLF.

It belongs to the peptidase A8 family.

It is found in the cell inner membrane. It carries out the reaction Release of signal peptides from bacterial membrane prolipoproteins. Hydrolyzes -Xaa-Yaa-Zaa-|-(S,diacylglyceryl)Cys-, in which Xaa is hydrophobic (preferably Leu), and Yaa (Ala or Ser) and Zaa (Gly or Ala) have small, neutral side chains.. It participates in protein modification; lipoprotein biosynthesis (signal peptide cleavage). Functionally, this protein specifically catalyzes the removal of signal peptides from prolipoproteins. The polypeptide is Lipoprotein signal peptidase (Francisella tularensis subsp. novicida (strain U112)).